We begin with the raw amino-acid sequence, 651 residues long: Acetyl-coenzyme A synthetase (651 aa).

CoA is bound by residues arginine 190 to lysine 193 and threonine 311. ATP is bound by residues glycine 387–proline 389, aspartate 411–threonine 416, aspartate 508, and arginine 523. Serine 531 serves as a coordination point for CoA. Arginine 534 is a binding site for ATP. Residues valine 545, histidine 547, and valine 550 each contribute to the Mg(2+) site. Position 617 is an N6-acetyllysine (lysine 617).

Belongs to the ATP-dependent AMP-binding enzyme family. Mg(2+) is required as a cofactor. Acetylated. Deacetylation by the SIR2-homolog deacetylase activates the enzyme.

The catalysed reaction is acetate + ATP + CoA = acetyl-CoA + AMP + diphosphate. In terms of biological role, catalyzes the conversion of acetate into acetyl-CoA (AcCoA), an essential intermediate at the junction of anabolic and catabolic pathways. AcsA undergoes a two-step reaction. In the first half reaction, AcsA combines acetate with ATP to form acetyl-adenylate (AcAMP) intermediate. In the second half reaction, it can then transfer the acetyl group from AcAMP to the sulfhydryl group of CoA, forming the product AcCoA. M.tuberculosis may use AcsA for both acetate and propionate assimilation. This Mycobacterium tuberculosis (strain CDC 1551 / Oshkosh) protein is Acetyl-coenzyme A synthetase.